The sequence spans 261 residues: MDMKRRIHLELRNRTPAAVRELVLDNCKSNDGKIEGLTAEFVNLEFLSLINVGLISVSNLPKLPKLKKLELSDNRICGGLDMLAEKLPNLTHLNLSGNKLKDIGTLEPLKKLECLKSLDLFNCEVTNLNDYRESVFKLLPQLTYLDGYDREDREAPDSDAEVDGVDEEEDDEEGENEDKEEDEDGEEEEFDDEEDDDEDEDVEGEEDEDKVSGEEEEFGHDGEADEDDEDEDEDEDEDEEEEESGKGEGRKRETDDEGEDD.

LRR repeat units follow at residues 16-40 (PAAVRELVLDNCKSNDGKIEGLTAE), 43-64 (NLEFLSLINVGLISVSNLPKLP), 65-87 (KLKKLELSDNRICGGLDMLAEKL), and 89-110 (NLTHLNLSGNKLKDIGTLEPLK). Position 86 is an N6-acetyllysine (lysine 86). Residues 123–161 (CEVTNLNDYRESVFKLLPQLTYLDGYDREDREAPDSDAE) form the LRRCT domain. The tract at residues 149–261 (DREDREAPDS…RETDDEGEDD (113 aa)) is disordered. Positions 157-243 (DSDAEVDGVD…DEDEDEEEEE (87 aa)) are enriched in acidic residues. Position 158 is a phosphoserine (serine 158). The span at 244–254 (SGKGEGRKRET) shows a compositional bias: basic and acidic residues. Phosphothreonine is present on threonine 254.

Belongs to the ANP32 family. In terms of assembly, monomer. Interacts with histones H3 and H4. Post-translationally, some glutamate residues are glycylated by TTLL8. This modification occurs exclusively on glutamate residues and results in a glycine chain on the gamma-carboxyl group.

Its subcellular location is the nucleus. Its function is as follows. Multifunctional protein working as a cell cycle progression factor as well as a cell survival factor. Required for the progression from the G1 to the S phase. Anti-apoptotic protein which functions as a caspase-3 inhibitor. Has no phosphatase 2A (PP2A) inhibitor activity. Exhibits histone chaperone properties, stimulating core histones to assemble into a nucleosome. The sequence is that of Acidic leucine-rich nuclear phosphoprotein 32 family member B (ANP32B) from Ovis aries (Sheep).